The primary structure comprises 190 residues: Small ribosomal subunit protein uS5 (190 aa).

The 64-residue stretch at 22 to 85 (FVDKLVHINR…DSAKRNLTRV (64 aa)) folds into the S5 DRBM domain.

It belongs to the universal ribosomal protein uS5 family. Part of the 30S ribosomal subunit. Contacts proteins S4 and S8.

In terms of biological role, with S4 and S12 plays an important role in translational accuracy. Its function is as follows. Located at the back of the 30S subunit body where it stabilizes the conformation of the head with respect to the body. In Bradyrhizobium sp. (strain BTAi1 / ATCC BAA-1182), this protein is Small ribosomal subunit protein uS5.